We begin with the raw amino-acid sequence, 624 residues long: Phosphomethylpyrimidine synthase (624 aa).

Residues Asn-231, Met-260, Tyr-289, His-325, 345–347 (SRG), 386–389 (DGLR), and Glu-425 contribute to the substrate site. His-429 contacts Zn(2+). Residue Tyr-452 coordinates substrate. His-493 serves as a coordination point for Zn(2+). [4Fe-4S] cluster contacts are provided by Cys-573, Cys-576, and Cys-581.

Belongs to the ThiC family. In terms of assembly, homodimer. It depends on [4Fe-4S] cluster as a cofactor.

The catalysed reaction is 5-amino-1-(5-phospho-beta-D-ribosyl)imidazole + S-adenosyl-L-methionine = 4-amino-2-methyl-5-(phosphooxymethyl)pyrimidine + CO + 5'-deoxyadenosine + formate + L-methionine + 3 H(+). The protein operates within cofactor biosynthesis; thiamine diphosphate biosynthesis. In terms of biological role, catalyzes the synthesis of the hydroxymethylpyrimidine phosphate (HMP-P) moiety of thiamine from aminoimidazole ribotide (AIR) in a radical S-adenosyl-L-methionine (SAM)-dependent reaction. This Myxococcus xanthus (strain DK1622) protein is Phosphomethylpyrimidine synthase.